We begin with the raw amino-acid sequence, 1102 residues long: Phosphatidylinositol 4,5-bisphosphate 3-kinase catalytic subunit gamma isoform (1102 aa).

The PI3K-ABD domain maps to serine 34–histidine 141. The PI3K-RBD domain occupies asparagine 217 to threonine 309. One can recognise a C2 PI3K-type domain in the interval cysteine 357–aspartate 521. Residues aspartate 541 to glycine 723 form the PIK helical domain. The 284-residue stretch at valine 797–tryptophan 1080 folds into the PI3K/PI4K catalytic domain. The tract at residues valine 803–lysine 809 is G-loop. ATP is bound by residues glycine 829–leucine 838 and leucine 864–threonine 872. The segment at glycine 943–asparagine 951 is catalytic loop. Phenylalanine 961–leucine 969 contributes to the ATP binding site. Positions histidine 962–threonine 988 are activation loop. At threonine 1024 the chain carries Phosphothreonine; by PKA. Serine 1101 is subject to Phosphoserine; by autocatalysis.

This sequence belongs to the PI3/PI4-kinase family. As to quaternary structure, heterodimer of a catalytic subunit PIK3CG and a PIK3R5 or PIK3R6 regulatory subunit. Interacts with GRK2 through the PIK helical domain. Interaction with GRK2 is required for targeting to agonist-occupied receptor. Interacts with PDE3B; regulates PDE3B activity and thereby cAMP levels in cells. Interacts with TPM2. Interacts with EPHA8; regulates integrin-mediated cell adhesion to substrate. Interacts with HRAS; the interaction is required for membrane recruitment and beta-gamma G protein dimer-dependent activation of the PI3K gamma complex PIK3CG:PIK3R6. In terms of processing, autophosphorylation at Ser-1101 has no effect on the phosphatidylinositol-4,5-bisphosphate 3-kinase activity.

It is found in the cytoplasm. It localises to the cell membrane. The enzyme catalyses a 1,2-diacyl-sn-glycero-3-phospho-(1D-myo-inositol-4,5-bisphosphate) + ATP = a 1,2-diacyl-sn-glycero-3-phospho-(1D-myo-inositol-3,4,5-trisphosphate) + ADP + H(+). The catalysed reaction is a 1,2-diacyl-sn-glycero-3-phospho-(1D-myo-inositol) + ATP = a 1,2-diacyl-sn-glycero-3-phospho-(1D-myo-inositol-3-phosphate) + ADP + H(+). It catalyses the reaction a 1,2-diacyl-sn-glycero-3-phospho-(1D-myo-inositol 4-phosphate) + ATP = a 1,2-diacyl-sn-glycero-3-phospho-(1D-myo-inositol-3,4-bisphosphate) + ADP + H(+). It carries out the reaction L-seryl-[protein] + ATP = O-phospho-L-seryl-[protein] + ADP + H(+). It functions in the pathway phospholipid metabolism; phosphatidylinositol phosphate biosynthesis. Its activity is regulated as follows. Activated by both the alpha and the beta-gamma G proteins following stimulation of G protein-coupled receptors (GPCRs). Activation by GPCRs is assisted by the regulatory subunits (PIK3R5 or PIK3R6) leading to the translocation from the cytosol to the plasma membrane and to kinase activation. When bound to PIK3R5 the PI3K activity of PIK3CG could be activated greater than 100-fold by the beta-gamma G proteins. In terms of biological role, phosphoinositide-3-kinase (PI3K) that phosphorylates PtdIns(4,5)P2 (Phosphatidylinositol 4,5-bisphosphate) to generate phosphatidylinositol 3,4,5-trisphosphate (PIP3). PIP3 plays a key role by recruiting PH domain-containing proteins to the membrane, including AKT1 and PDPK1, activating signaling cascades involved in cell growth, survival, proliferation, motility and morphology. Links G-protein coupled receptor activation to PIP3 production. Involved in immune, inflammatory and allergic responses. Modulates leukocyte chemotaxis to inflammatory sites and in response to chemoattractant agents. May control leukocyte polarization and migration by regulating the spatial accumulation of PIP3 and by regulating the organization of F-actin formation and integrin-based adhesion at the leading edge. Controls motility of dendritic cells. Participates in T-lymphocyte migration. Regulates T-lymphocyte proliferation and cytokine production. Required for B-lymphocyte development and signaling. Together with other PI3Ks are involved in the oxidative burst produced by neutrophils in response to chemotactic agents. Together with PIK3CD regulate neutrophil extravasation. Together with PIK3CB promotes platelet aggregation and thrombosis. Regulates alpha-IIb/beta-3 integrins (ITGA2B/ ITGB3) adhesive function in platelets downstream of P2Y12 through a lipid kinase activity-independent mechanism. May have also a lipid kinase activity-dependent function in platelet aggregation. Involved in endothelial progenitor cell migration. Negative regulator of cardiac contractility. Modulates cardiac contractility by anchoring protein kinase A (PKA) and PDE3B activation, reducing cAMP levels. Regulates cardiac contractility also by promoting beta-adrenergic receptor internalization by binding to GRK2 and by non-muscle tropomyosin phosphorylation. Also has serine/threonine protein kinase activity: both lipid and protein kinase activities are required for beta-adrenergic receptor endocytosis. May also have a scaffolding role in modulating cardiac contractility. Contribute to cardiac hypertrophy under pathological stress. Through simultaneous binding of PDE3B to RAPGEF3 and PIK3R6 is assembled in a signaling complex in which the PI3K gamma complex is activated by RAPGEF3 and which is involved in angiogenesis. In neutrophils, participates in a phospholipase C-activating N-formyl peptide-activated GPCR (G protein-coupled receptor) signaling pathway downstream of RASGRP4-mediated Ras-activation, to promote neutrophil functional responses. The protein is Phosphatidylinositol 4,5-bisphosphate 3-kinase catalytic subunit gamma isoform (PIK3CG) of Sus scrofa (Pig).